Consider the following 267-residue polypeptide: Enolase-phosphatase E1 (267 aa).

Mg(2+) contacts are provided by aspartate 11 and glutamate 13. Substrate is bound by residues 155–156 and lysine 189; that span reads SS. Mg(2+) is bound at residue aspartate 215.

It belongs to the HAD-like hydrolase superfamily. MasA/MtnC family. As to quaternary structure, monomer. Requires Mg(2+) as cofactor.

Its subcellular location is the cytoplasm. It is found in the nucleus. It catalyses the reaction 5-methylsulfanyl-2,3-dioxopentyl phosphate + H2O = 1,2-dihydroxy-5-(methylsulfanyl)pent-1-en-3-one + phosphate. It participates in amino-acid biosynthesis; L-methionine biosynthesis via salvage pathway; L-methionine from S-methyl-5-thio-alpha-D-ribose 1-phosphate: step 3/6. Its pathway is amino-acid biosynthesis; L-methionine biosynthesis via salvage pathway; L-methionine from S-methyl-5-thio-alpha-D-ribose 1-phosphate: step 4/6. Its function is as follows. Bifunctional enzyme that catalyzes the enolization of 2,3-diketo-5-methylthiopentyl-1-phosphate (DK-MTP-1-P) into the intermediate 2-hydroxy-3-keto-5-methylthiopentenyl-1-phosphate (HK-MTPenyl-1-P), which is then dephosphorylated to form the acireductone 1,2-dihydroxy-3-keto-5-methylthiopentene (DHK-MTPene). The sequence is that of Enolase-phosphatase E1 (enoph1) from Dictyostelium discoideum (Social amoeba).